A 226-amino-acid chain; its full sequence is Cell division protein SepF (226 aa).

The tract at residues 20-116 (RAYDDAGYDK…ESLTYHTRDN (97 aa)) is disordered. Residues 22–44 (YDDAGYDKGGYRESRYRSSRYSE) are compositionally biased toward basic and acidic residues. Over residues 45-56 (DFGDEDDEDEEA) the composition is skewed to acidic residues. A compositionally biased stretch (basic and acidic residues) spans 62-95 (RRGDRSRLERAAARSGDVDHNVEGEQPERVERAS). The span at 97–111 (RSITRSAEPSESLTY) shows a compositional bias: polar residues.

This sequence belongs to the SepF family. Homodimer. Interacts with FtsZ.

The protein localises to the cytoplasm. Functionally, cell division protein that is part of the divisome complex and is recruited early to the Z-ring. Probably stimulates Z-ring formation, perhaps through the cross-linking of FtsZ protofilaments. Its function overlaps with FtsA. This is Cell division protein SepF from Salinispora arenicola (strain CNS-205).